The primary structure comprises 376 residues: Chaperone protein DnaJ (376 aa).

Residues 5–72 (DFYEVLGVPK…QKRAAYDQYG (68 aa)) enclose the J domain. A CR-type zinc finger spans residues 136 to 214 (GKEAQIRIPS…CHGQGRVKKQ (79 aa)). 8 residues coordinate Zn(2+): Cys149, Cys152, Cys166, Cys169, Cys188, Cys191, Cys202, and Cys205. CXXCXGXG motif repeat units lie at residues 149–156 (CETCHGSG), 166–173 (CGTCQGSG), 188–195 (CPHCRGTG), and 202–209 (CTACHGQG). 2 disordered regions span residues 227 to 246 (DGMR…GGPP) and 354 to 376 (KKGG…SFFS). A compositionally biased stretch (gly residues) spans 237–246 (GEPGTNGGPP). Basic and acidic residues predominate over residues 367 to 376 (WTDRLKSFFS).

Belongs to the DnaJ family. As to quaternary structure, homodimer. Zn(2+) is required as a cofactor.

Its subcellular location is the cytoplasm. In terms of biological role, participates actively in the response to hyperosmotic and heat shock by preventing the aggregation of stress-denatured proteins and by disaggregating proteins, also in an autonomous, DnaK-independent fashion. Unfolded proteins bind initially to DnaJ; upon interaction with the DnaJ-bound protein, DnaK hydrolyzes its bound ATP, resulting in the formation of a stable complex. GrpE releases ADP from DnaK; ATP binding to DnaK triggers the release of the substrate protein, thus completing the reaction cycle. Several rounds of ATP-dependent interactions between DnaJ, DnaK and GrpE are required for fully efficient folding. Also involved, together with DnaK and GrpE, in the DNA replication of plasmids through activation of initiation proteins. The chain is Chaperone protein DnaJ from Acidovorax ebreus (strain TPSY) (Diaphorobacter sp. (strain TPSY)).